Reading from the N-terminus, the 381-residue chain is 40-kDa huntingtin-associated protein (381 aa).

Ala2 carries the N-acetylalanine modification. The Nuclear localization signal signature appears at 34–36; the sequence is KKR. The segment at 221–265 is disordered; it reads QLELLPQPPSGPQPPLSGPQPRPVLGSTLPLPQPPDHAPGSVAPS. Over residues 226–242 the composition is skewed to pro residues; it reads PQPPSGPQPPLSGPQPR.

As to quaternary structure, interacts with HTT (via C-terminus). Interacts with RAB5A. Found in a complex with F8A1/F8A2/F8A3, HTT and RAB5A; mediates the recruitment of HTT by RAB5A onto early endosomes. In terms of tissue distribution, produced abundantly in a wide variety of cell types.

It is found in the cytoplasm. It localises to the nucleus. The protein localises to the early endosome. The protein resides in the nuclear body. Its function is as follows. RAB5A effector molecule that is involved in vesicular trafficking of early endosomes. Mediates the recruitment of HTT by RAB5A onto early endosomes. The HTT-F8A1/F8A2/F8A3-RAB5A complex stimulates early endosomal interaction with actin filaments and inhibits interaction with microtubules, leading to the reduction of endosome motility. This chain is 40-kDa huntingtin-associated protein (F8a1), found in Mus musculus (Mouse).